The following is a 186-amino-acid chain: Dynactin subunit 3 (186 aa).

Alanine 2 carries the N-acetylalanine modification.

It belongs to the dynactin subunit 3 family. As to quaternary structure, subunit of dynactin, a multiprotein complex part of a tripartite complex with dynein and a adapter, such as BICDL1, BICD2 or HOOK3. The dynactin complex is built around ACTR1A/ACTB filament and consists of an actin-related filament composed of a shoulder domain, a pointed end and a barbed end. Its length is defined by its flexible shoulder domain. The soulder is composed of 2 DCTN1 subunits, 4 DCTN2 and 2 DCTN3. The 4 DCNT2 (via N-terminus) bind the ACTR1A filament and act as molecular rulers to determine the length. The pointed end is important for binding dynein-dynactin cargo adapters. Consists of 4 subunits: ACTR10, DCNT4, DCTN5 and DCTN6. The barbed end is composed of a CAPZA1:CAPZB heterodimers, which binds ACTR1A/ACTB filament and dynactin and stabilizes dynactin.

The protein resides in the cytoplasm. Its subcellular location is the cytoskeleton. It is found in the microtubule organizing center. The protein localises to the centrosome. It localises to the chromosome. The protein resides in the centromere. Its subcellular location is the kinetochore. It is found in the spindle. The protein localises to the cleavage furrow. It localises to the midbody. Part of the dynactin complex that activates the molecular motor dynein for ultra-processive transport along microtubules. Together with dynein is involved in spindle assembly and cytokinesis. This chain is Dynactin subunit 3, found in Sus scrofa (Pig).